The sequence spans 689 residues: Glycine--tRNA ligase beta subunit (689 aa).

It belongs to the class-II aminoacyl-tRNA synthetase family. Tetramer of two alpha and two beta subunits.

The protein resides in the cytoplasm. It catalyses the reaction tRNA(Gly) + glycine + ATP = glycyl-tRNA(Gly) + AMP + diphosphate. The sequence is that of Glycine--tRNA ligase beta subunit from Salmonella paratyphi A (strain ATCC 9150 / SARB42).